A 314-amino-acid polypeptide reads, in one-letter code: Transmembrane protein 178B (314 aa).

The N-terminal stretch at 1 to 24 is a signal peptide; that stretch reads MRLLAGAGLCLALAALALLAVALS. Residues 32–83 form a disordered region; sequence DARRHRDRCRKPGGKRNDPGYMYTPGQHLPLRGEPPSSRIRSPRGGEPGGVR. Residues 36–45 show a composition bias toward basic residues; the sequence is HRDRCRKPGG. The next 3 helical transmembrane spans lie at 194–214, 228–248, and 274–294; these read AGFI…GVLG, LLFL…VAGI, and MFCA…CTLA.

This sequence belongs to the TMEM178 family.

The protein localises to the membrane. This Xenopus tropicalis (Western clawed frog) protein is Transmembrane protein 178B (tmem178b).